A 371-amino-acid polypeptide reads, in one-letter code: Diguanylate cyclase A (371 aa).

The GGDEF domain maps to 233–366; it reads ETLSILMIDI…GRNRVTLSKN (134 aa). Residues aspartate 241, isoleucine 242, and glutamate 284 each contribute to the Mg(2+) site. The Proton acceptor role is filled by glutamate 284.

As to quaternary structure, exists as a homodimer and as larger aggregates. Both dimers and aggregates possess DGC activity. Mg(2+) serves as cofactor. Mn(2+) is required as a cofactor.

The protein localises to the cytoplasm. It catalyses the reaction 2 GTP = 3',3'-c-di-GMP + 2 diphosphate. With respect to regulation, allosterically regulated by a feedback inhibition loop. Its function is as follows. Catalyzes the conversion of GTP to cyclic-di-GMP (c-di-GMP). Shows activity under aerobic and anaerobic reaction conditions. This is Diguanylate cyclase A from Treponema denticola (strain ATCC 35405 / DSM 14222 / CIP 103919 / JCM 8153 / KCTC 15104).